We begin with the raw amino-acid sequence, 363 residues long: Histidinol-phosphate aminotransferase (363 aa).

K227 is subject to N6-(pyridoxal phosphate)lysine.

The protein belongs to the class-II pyridoxal-phosphate-dependent aminotransferase family. Histidinol-phosphate aminotransferase subfamily. Homodimer. Pyridoxal 5'-phosphate is required as a cofactor.

It catalyses the reaction L-histidinol phosphate + 2-oxoglutarate = 3-(imidazol-4-yl)-2-oxopropyl phosphate + L-glutamate. It functions in the pathway amino-acid biosynthesis; L-histidine biosynthesis; L-histidine from 5-phospho-alpha-D-ribose 1-diphosphate: step 7/9. This Akkermansia muciniphila (strain ATCC BAA-835 / DSM 22959 / JCM 33894 / BCRC 81048 / CCUG 64013 / CIP 107961 / Muc) protein is Histidinol-phosphate aminotransferase.